A 397-amino-acid chain; its full sequence is Elongation factor Tu 1 (397 aa).

Residues 10 to 207 form the tr-type G domain; the sequence is KPHVNVGTIG…TLDSYIPEPV (198 aa). A G1 region spans residues 19–26; it reads GHVDHGKT. Residue 19–26 participates in GTP binding; sequence GHVDHGKT. Position 26 (threonine 26) interacts with Mg(2+). Residues 60 to 64 are G2; sequence GITIN. The G3 stretch occupies residues 81 to 84; that stretch reads DCPG. GTP is bound by residues 81-85 and 136-139; these read DCPGH and NKAD. Positions 136–139 are G4; the sequence is NKAD. The segment at 174 to 176 is G5; that stretch reads SAL.

This sequence belongs to the TRAFAC class translation factor GTPase superfamily. Classic translation factor GTPase family. EF-Tu/EF-1A subfamily. As to quaternary structure, monomer.

It localises to the cytoplasm. It carries out the reaction GTP + H2O = GDP + phosphate + H(+). Its function is as follows. GTP hydrolase that promotes the GTP-dependent binding of aminoacyl-tRNA to the A-site of ribosomes during protein biosynthesis. The sequence is that of Elongation factor Tu 1 from Stutzerimonas stutzeri (strain A1501) (Pseudomonas stutzeri).